A 248-amino-acid chain; its full sequence is Pyruvate formate-lyase-activating enzyme (248 aa).

Positions 17 to 248 (VDGPGIRFIV…NKILETSSYK (232 aa)) constitute a Radical SAM core domain. Residues cysteine 31, cysteine 35, and cysteine 38 each contribute to the [4Fe-4S] cluster site. S-adenosyl-L-methionine contacts are provided by residues 37–39 (FCH), glycine 80, 135–137 (DIK), and histidine 208.

This sequence belongs to the organic radical-activating enzymes family. [4Fe-4S] cluster serves as cofactor.

Its subcellular location is the cytoplasm. The enzyme catalyses glycyl-[formate C-acetyltransferase] + reduced [flavodoxin] + S-adenosyl-L-methionine = glycin-2-yl radical-[formate C-acetyltransferase] + semiquinone [flavodoxin] + 5'-deoxyadenosine + L-methionine + H(+). Functionally, activation of pyruvate formate-lyase under anaerobic conditions by generation of an organic free radical, using S-adenosylmethionine and reduced flavodoxin as cosubstrates to produce 5'-deoxy-adenosine. This is Pyruvate formate-lyase-activating enzyme (pflA) from Listeria innocua serovar 6a (strain ATCC BAA-680 / CLIP 11262).